Here is a 209-residue protein sequence, read N- to C-terminus: Protein ASG7 (209 aa).

At 1–49 the chain is on the lumenal side; that stretch reads MTTLASSIEHKTKHLAAPFENDENPWMKKYCCQCKSCKMSVPVQPWLPR. The helical transmembrane segment at 50-70 threads the bilayer; it reads FFVFGILCPVFWLVNLLAWWF. The Cytoplasmic portion of the chain corresponds to 71-184; the sequence is LQYWQPHELE…LLRKTFRDWN (114 aa). Residues serine 121, serine 123, and serine 125 each carry the phosphoserine modification. At threonine 153 the chain carries Phosphothreonine. A helical membrane pass occupies residues 185-205; that stretch reads LRSLLGLLIDSILIIFVVLLC. At 206–209 the chain is on the lumenal side; sequence KKSR.

The protein resides in the endomembrane system. Functionally, required for receptor inhibition of inappropriately expressed a-factor receptor (STE3) in MAT a cells. Inhibits signaling by relocalizing the G protein beta-gamma (STE4-STE18) subunit to intracellular membranes. May also be a mechanism for the down-regulation of the mating pheromone response after the zygotic fusion event, promoting the transition of the new diploid cell to vegetative growth. This Saccharomyces cerevisiae (strain ATCC 204508 / S288c) (Baker's yeast) protein is Protein ASG7 (ASG7).